Consider the following 557-residue polypeptide: Alpha-glucosidase (557 aa).

Residue Asp201 is the Nucleophile of the active site. Glu256 (proton donor) is an active-site residue.

This sequence belongs to the glycosyl hydrolase 13 family.

It catalyses the reaction Hydrolysis of terminal, non-reducing (1-&gt;4)-linked alpha-D-glucose residues with release of alpha-D-glucose.. The polypeptide is Alpha-glucosidase (agl) (Pediococcus pentosaceus).